Reading from the N-terminus, the 623-residue chain is Activator of C kinase protein 1 (623 aa).

The tract at residues 141–230 is disordered; that stretch reads KESLGSPAVQ…GSSGGEDKLS (90 aa). Positions 152–161 are enriched in polar residues; the sequence is ASISSGNRIS. Basic and acidic residues predominate over residues 176–193; that stretch reads SESRILQEKVYRTEEKAP. Glycyl lysine isopeptide (Lys-Gly) (interchain with G-Cter in ubiquitin) cross-links involve residues Lys184 and Lys191. A compositionally biased stretch (polar residues) spans 206–215; the sequence is KINQPPTGSA. Sel1-like repeat units lie at residues 318 to 361, 408 to 444, 495 to 531, and 576 to 611; these read PPAM…KLNN, SACM…QKGD, PLAQ…AAQP, and ARTE…RMGF.

In Saccharomyces cerevisiae (strain ATCC 204508 / S288c) (Baker's yeast), this protein is Activator of C kinase protein 1 (ACK1).